The chain runs to 137 residues: Histone H2B.3 (137 aa).

Residues 1-37 are compositionally biased toward basic and acidic residues; that stretch reads KPAEKKPAEKTPVAEKAPAEKKPKAGKKLPKDAAAGD. The tract at residues 1–45 is disordered; it reads KPAEKKPAEKTPVAEKAPAEKKPKAGKKLPKDAAAGDKKKKRSKK. N6-acetyllysine is present on residues Lys27 and Lys28. Lys133 is covalently cross-linked (Glycyl lysine isopeptide (Lys-Gly) (interchain with G-Cter in ubiquitin)).

The protein belongs to the histone H2B family. As to quaternary structure, the nucleosome is a histone octamer containing two molecules each of H2A, H2B, H3 and H4 assembled in one H3-H4 heterotetramer and two H2A-H2B heterodimers. The octamer wraps approximately 147 bp of DNA. Can be acetylated to formH2BK33ac and H2BK34ac. Post-translationally, monoubiquitinated to form H2BK143ub1; may give a specific tag for epigenetic transcriptional activation. In terms of tissue distribution, ubiquitous. Highest level in shoots, fruits and young flower buds, including petals, anthers and ovules.

It localises to the nucleus. The protein resides in the chromosome. Its function is as follows. Core component of nucleosome. Nucleosomes wrap and compact DNA into chromatin, limiting DNA accessibility to the cellular machineries which require DNA as a template. Histones thereby play a central role in transcription regulation, DNA repair, DNA replication and chromosomal stability. DNA accessibility is regulated via a complex set of post-translational modifications of histones, also called histone code, and nucleosome remodeling. In Solanum lycopersicum (Tomato), this protein is Histone H2B.3 (H2B-3).